Consider the following 347-residue polypeptide: Dihydroorotate dehydrogenase (quinone) (347 aa).

FMN is bound by residues 62–66 (AGLDK) and Thr-86. Lys-66 is a substrate binding site. A substrate-binding site is contributed by 111–115 (NRMGF). FMN-binding residues include Asn-142 and Asn-175. Position 175 (Asn-175) interacts with substrate. The Nucleophile role is filled by Ser-178. Position 180 (Asn-180) interacts with substrate. 2 residues coordinate FMN: Lys-220 and Thr-248. Residue 249-250 (NT) coordinates substrate. FMN-binding positions include Gly-271, Gly-300, and 321–322 (YS).

Belongs to the dihydroorotate dehydrogenase family. Type 2 subfamily. Monomer. FMN serves as cofactor.

It localises to the cell membrane. It catalyses the reaction (S)-dihydroorotate + a quinone = orotate + a quinol. It functions in the pathway pyrimidine metabolism; UMP biosynthesis via de novo pathway; orotate from (S)-dihydroorotate (quinone route): step 1/1. In terms of biological role, catalyzes the conversion of dihydroorotate to orotate with quinone as electron acceptor. The polypeptide is Dihydroorotate dehydrogenase (quinone) (Dechloromonas aromatica (strain RCB)).